A 159-amino-acid polypeptide reads, in one-letter code: Ribosomal RNA large subunit methyltransferase H (159 aa).

S-adenosyl-L-methionine-binding positions include leucine 76, glycine 108, and 127–132 (FSKMTF).

The protein belongs to the RNA methyltransferase RlmH family. In terms of assembly, homodimer.

The protein resides in the cytoplasm. The catalysed reaction is pseudouridine(1915) in 23S rRNA + S-adenosyl-L-methionine = N(3)-methylpseudouridine(1915) in 23S rRNA + S-adenosyl-L-homocysteine + H(+). Functionally, specifically methylates the pseudouridine at position 1915 (m3Psi1915) in 23S rRNA. The protein is Ribosomal RNA large subunit methyltransferase H of Bifidobacterium animalis subsp. lactis (strain AD011).